The primary structure comprises 309 residues: Homoserine O-succinyltransferase (309 aa).

The active-site Acyl-thioester intermediate is the cysteine 142. Substrate is bound by residues lysine 163 and serine 192. The active-site Proton acceptor is the histidine 235. The active site involves glutamate 237. A substrate-binding site is contributed by arginine 249.

This sequence belongs to the MetA family. As to quaternary structure, homodimer.

It localises to the cytoplasm. The enzyme catalyses L-homoserine + succinyl-CoA = O-succinyl-L-homoserine + CoA. It participates in amino-acid biosynthesis; L-methionine biosynthesis via de novo pathway; O-succinyl-L-homoserine from L-homoserine: step 1/1. Transfers a succinyl group from succinyl-CoA to L-homoserine, forming succinyl-L-homoserine. The sequence is that of Homoserine O-succinyltransferase from Escherichia coli O127:H6 (strain E2348/69 / EPEC).